Here is a 151-residue protein sequence, read N- to C-terminus: Sigma factor binding protein 1, chloroplastic (151 aa).

The segment covering 1–13 (MESSSSTFLTTTS) has biased composition (low complexity). Disordered regions lie at residues 1–41 (MESS…KPIK) and 66–93 (TGQDAVDLQPEPIYSPSSDDHNLSPPAE). A chloroplast-targeting transit peptide spans 1–54 (MESSSSTFLTTTSLDKKKPSPVSRKSPKQKKKTTSTNKPIKVRYISNPMRVQTC). Residues 16-32 (KKKPSPVSRKSPKQKKK) carry the Bipartite nuclear localization signal motif. The VQ motif lies at 58-67 (FRELVQELTG).

Interacts with the sigma factor SIGA in chloroplast. Interacts with WRKY25 and WRKY33 in the nucleus. In terms of tissue distribution, expressed in leaves and roots, but not in flowers.

The protein localises to the plastid. The protein resides in the chloroplast. It localises to the nucleus. Contributes to plant defense. May regulate chloroplast metabolism upon infection with pathogens such as Pseudomonas syringae. Functions as activator of WRKY33 in plant defense against necrotrophic pathogens by stimulating the DNA-binding activity of WRKY33. The polypeptide is Sigma factor binding protein 1, chloroplastic (SIB1) (Arabidopsis thaliana (Mouse-ear cress)).